Reading from the N-terminus, the 295-residue chain is Defective in cullin neddylation protein AAR3 (295 aa).

The DCUN1 domain occupies 1–180; it reads MDSSPVSARF…LIDDFVEHMY (180 aa). The Nuclear localization signal signature appears at 214 to 221; sequence YRRPHTGL. Residues 214-251 form a disordered region; the sequence is YRRPHTGLRNIPGLKRKTSKKNDEEEEDEDEEVLETQN. Acidic residues predominate over residues 237–247; the sequence is EEEEDEDEEVL.

The protein localises to the nucleus. May contribute to the neddylation of all cullins by transferring NEDD8 from N-terminally acetylated NEDD8-conjugating E2s enzyme to different cullin C-terminal domain-RBX complexes; neddylation of cullins play an essential role in the regulation of SCF-type complexes activity. Regulates responses to the synthetic auxin 2,4-dichlorophenoxyacetic acid (2,4-D) in roots, probably by modulating the SCF(TIR1) ubiquitin E3 ligase complex-mediated proteolysis. The protein is Defective in cullin neddylation protein AAR3 of Arabidopsis thaliana (Mouse-ear cress).